A 218-amino-acid chain; its full sequence is Cytochrome b6 (218 aa).

Residues 35–55 (IFYCLGGITLVCFLVQFATGF) form a helical membrane-spanning segment. Position 38 (Cys38) interacts with heme c. Residues His89 and His103 each coordinate heme b. 3 consecutive transmembrane segments (helical) span residues 93–113 (ASMM…TGGF), 119–139 (LTWV…VTGY), and 189–209 (LHTF…FLMI). Heme b contacts are provided by His190 and His205.

The protein belongs to the cytochrome b family. PetB subfamily. The 4 large subunits of the cytochrome b6-f complex are cytochrome b6, subunit IV (17 kDa polypeptide, PetD), cytochrome f and the Rieske protein, while the 4 small subunits are PetG, PetL, PetM and PetN. The complex functions as a dimer. Requires heme b as cofactor. It depends on heme c as a cofactor.

The protein resides in the cellular thylakoid membrane. Component of the cytochrome b6-f complex, which mediates electron transfer between photosystem II (PSII) and photosystem I (PSI), cyclic electron flow around PSI, and state transitions. The polypeptide is Cytochrome b6 (Prochlorococcus marinus (strain MIT 9303)).